We begin with the raw amino-acid sequence, 150 residues long: uncharacterized protein (150 aa).

In terms of domain architecture, HTH asnC-type spans 5 to 66 (LDRTDKMLLE…KPNYKKLNLG (62 aa)). The H-T-H motif DNA-binding region spans 24–43 (IAALSKKLGIPRTTVHYRIK).

This is an uncharacterized protein from Pyrococcus furiosus (strain ATCC 43587 / DSM 3638 / JCM 8422 / Vc1).